We begin with the raw amino-acid sequence, 156 residues long: Small ribosomal subunit protein uS7 (156 aa).

The protein belongs to the universal ribosomal protein uS7 family. Part of the 30S ribosomal subunit. Contacts proteins S9 and S11.

One of the primary rRNA binding proteins, it binds directly to 16S rRNA where it nucleates assembly of the head domain of the 30S subunit. Is located at the subunit interface close to the decoding center, probably blocks exit of the E-site tRNA. The polypeptide is Small ribosomal subunit protein uS7 (Streptococcus mutans serotype c (strain ATCC 700610 / UA159)).